Reading from the N-terminus, the 211-residue chain is Calaxin (211 aa).

3 consecutive EF-hand domains span residues 64–99, 100–135, and 145–180; these read TDDM…FLRG, SLEE…SLLK, and GIKD…ETLL. The Ca(2+) site is built by D77, D79, D81, C83, E88, D113, N115, D117, E124, D158, D160, D162, K164, and D169.

In terms of assembly, component of the outer dynein arm-docking complex along with ODAD1, ODAD2, ODAD3 and ODAD4. In terms of tissue distribution, strong expression in the respiratory epithelium. Expressed in the sperm.

It localises to the cytoplasm. The protein resides in the cytoskeleton. Its subcellular location is the cilium axoneme. It is found in the cell projection. The protein localises to the cilium. It localises to the flagellum. Its function is as follows. Component of the outer dynein arm-docking complex (ODA-DC) that mediates outer dynein arms (ODA) binding onto the doublet microtubule. Seems to regulate the assembly of both ODAs and their axonemal docking complex onto ciliary microtubules. Regulates ciliary and flagellar motility and is required for cilia-driven determination of body laterality. The polypeptide is Calaxin (Homo sapiens (Human)).